The sequence spans 109 residues: UPF0154 protein UPA3_0273 (109 aa).

Residues 42 to 62 (VGLGIGIVLFLIAGLIIGYFI) form a helical membrane-spanning segment.

Belongs to the UPF0154 family.

The protein localises to the cell membrane. The polypeptide is UPF0154 protein UPA3_0273 (Ureaplasma parvum serovar 3 (strain ATCC 27815 / 27 / NCTC 11736)).